Reading from the N-terminus, the 221-residue chain is LGLRACDGNVDHAAVHIANRREELDQIKKEEREKKKRRLENINHLKGMGYSMRAARQALHQAAGNLEEALKILLHNPQLWWLNDSAPESNNRQQSPSQEKIDQLVYMGFDAVAAKAALRVFRDNVQLAAQTLVHNGGRLPPDLQLSAEDSSSTPSTSPSDSAGTSSASTDEDMETEAVNEILEDIPEHEEDYLDSTLEDEEIIIAEYLSYVENIKSAAKKN.

UBA domains are found at residues 1 to 19 (LGLR…HIAN), 30 to 76 (EERE…LLHN), and 95 to 135 (SPSQ…LVHN). Residues 136–193 (GGRLPPDLQLSAEDSSSTPSTSPSDSAGTSSASTDEDMETEAVNEILEDIPEHEEDYL) are disordered. Residues 146 to 168 (SAEDSSSTPSTSPSDSAGTSSAS) show a composition bias toward low complexity. The span at 169-193 (TDEDMETEAVNEILEDIPEHEEDYL) shows a compositional bias: acidic residues.

As to quaternary structure, directly interacts with NEDD8 and PSMD4/S5a, a member of the regulatory subunit of the 26S proteasome. Interacts with AIPL1.

The protein resides in the nucleus. Its function is as follows. Specific down-regulator of the NEDD8 conjugation system. Recruits NEDD8 and its conjugates to the proteasome for degradation. The polypeptide is NEDD8 ultimate buster 1 (NUB1) (Bos taurus (Bovine)).